The chain runs to 194 residues: Putative manganese efflux pump MntP (194 aa).

6 helical membrane passes run 8 to 28 (LLAI…GIIL), 36 to 56 (MLIM…LGWL), 61 to 81 (FSHL…AFLG), 109 to 129 (MAVA…FLGI), 138 to 158 (PAGI…IFGI), and 172 to 192 (LWGG…HLFF).

The protein belongs to the MntP (TC 9.B.29) family.

The protein localises to the cell inner membrane. Its function is as follows. Probably functions as a manganese efflux pump. The polypeptide is Putative manganese efflux pump MntP (Bacteroides fragilis (strain ATCC 25285 / DSM 2151 / CCUG 4856 / JCM 11019 / LMG 10263 / NCTC 9343 / Onslow / VPI 2553 / EN-2)).